We begin with the raw amino-acid sequence, 445 residues long: Phosphoglucosamine mutase (445 aa).

Residue Ser102 is the Phosphoserine intermediate of the active site. Positions 102, 241, 243, and 245 each coordinate Mg(2+). A Phosphoserine modification is found at Ser102.

This sequence belongs to the phosphohexose mutase family. It depends on Mg(2+) as a cofactor. In terms of processing, activated by phosphorylation.

It catalyses the reaction alpha-D-glucosamine 1-phosphate = D-glucosamine 6-phosphate. Its function is as follows. Catalyzes the conversion of glucosamine-6-phosphate to glucosamine-1-phosphate. The polypeptide is Phosphoglucosamine mutase (Shigella flexneri serotype 5b (strain 8401)).